Here is an 858-residue protein sequence, read N- to C-terminus: Neural cell adhesion molecule 1 (858 aa).

The first 19 residues, 1–19 (MLQTKDLIWTLFFLGTAVS), serve as a signal peptide directing secretion. Ig-like C2-type domains are found at residues 20-111 (LQVD…ATVN), 116-205 (QKLM…KDIQ), 212-301 (PTIQ…ATIH), 308-413 (PKIT…LEVQ), and 416-501 (PKLQ…ESLE). Topologically, residues 20 to 718 (LQVDIVPSQG…IPANGSPTSG (699 aa)) are extracellular. Cystine bridges form between Cys41-Cys96 and Cys139-Cys189. An N-linked (GlcNAc...) asparagine glycan is attached at Asn222. Cys235 and Cys287 are disulfide-bonded. N-linked (GlcNAc...) asparagine glycans are attached at residues Asn315, Asn347, Asn433, Asn459, and Asn488. An intrachain disulfide couples Cys329 to Cys395. The cysteines at positions 436 and 489 are disulfide-linked. 2 Fibronectin type-III domains span residues 509-608 (TPSS…TQPV) and 611-706 (EPSA…SAQP). A lipid anchor (GPI-anchor amidated asparagine) is attached at Pro706. Residues 719-739 (LSTGAIVGILIVIFVLLLVVV) form a helical membrane-spanning segment. Residues 740–858 (DITCYFLNKC…TQTKENESKA (119 aa)) are Cytoplasmic-facing. Ile741 carries GPI-anchor amidated asparagine lipidation. A disordered region spans residues 766–858 (GAKGKDMEEG…TQTKENESKA (93 aa)). Composition is skewed to basic and acidic residues over residues 768–809 (KGKD…HTEP) and 817–834 (EPEK…ETET). Residues Ser780 and Ser784 each carry the phosphoserine modification.

As to quaternary structure, (Microbial infection) Interacts with rabies virus glycoprotein. In terms of assembly, (Microbial infection) Interacts with Zika virus envelope protein E. Interacts with MDK. Found in a complex with SLC39A6, SLC39A10 and with NCAM1; this complex controls NCAM1 phosphorylation and integration into focal adhesion complexes during epithelial-tomesenchymal transition. Interacts with synaptic plasticity regulator PANTS. Post-translationally, polysialylated at Asn-459 and Asn-488 by ST8SIA2 and ST8SIA4. Polysialylation modulates cell interactions by confering both attractive and repulsive properties that are highly regulated by ST8SIA2 and ST8SIA4. Polysialylation is formed on a-2,3-linked sialic acid of core glycans.

Its subcellular location is the cell membrane. The protein localises to the secreted. Its function is as follows. This protein is a cell adhesion molecule involved in neuron-neuron adhesion, neurite fasciculation, outgrowth of neurites, etc. (Microbial infection) Acts as a receptor for rabies virus. In terms of biological role, (Microbial infection) Acts as a receptor for Zika virus. The polypeptide is Neural cell adhesion molecule 1 (Homo sapiens (Human)).